The primary structure comprises 138 residues: Large ribosomal subunit protein bL17 (138 aa).

Belongs to the bacterial ribosomal protein bL17 family. In terms of assembly, part of the 50S ribosomal subunit. Contacts protein L32.

The sequence is that of Large ribosomal subunit protein bL17 from Buchnera aphidicola subsp. Schizaphis graminum (strain Sg).